The sequence spans 133 residues: Global transcriptional regulator Spx (133 aa).

Residues C10 and C13 are joined by a disulfide bond.

The protein belongs to the ArsC family. Spx subfamily. As to quaternary structure, interacts with the C-terminal domain of the alpha subunit of the RNAP.

It localises to the cytoplasm. In terms of biological role, global transcriptional regulator that plays a key role in stress response and exerts either positive or negative regulation of genes. Acts by interacting with the C-terminal domain of the alpha subunit of the RNA polymerase (RNAP). This interaction can enhance binding of RNAP to the promoter region of target genes and stimulate their transcription, or block interaction of RNAP with activator. The sequence is that of Global transcriptional regulator Spx from Streptococcus pneumoniae serotype 4 (strain ATCC BAA-334 / TIGR4).